Here is a 265-residue protein sequence, read N- to C-terminus: Tryptophan 2,3-dioxygenase (265 aa).

Substrate is bound by residues 38 to 42 (FIVVH) and Arg104. His223 lines the heme pocket. Residue Thr237 coordinates substrate.

Belongs to the tryptophan 2,3-dioxygenase family. In terms of assembly, homotetramer. Requires heme as cofactor.

The enzyme catalyses L-tryptophan + O2 = N-formyl-L-kynurenine. It participates in amino-acid degradation; L-tryptophan degradation via kynurenine pathway; L-kynurenine from L-tryptophan: step 1/2. Functionally, heme-dependent dioxygenase that catalyzes the oxidative cleavage of the L-tryptophan (L-Trp) pyrrole ring and converts L-tryptophan to N-formyl-L-kynurenine. Catalyzes the oxidative cleavage of the indole moiety. This chain is Tryptophan 2,3-dioxygenase, found in Anaeromyxobacter sp. (strain K).